Here is a 230-residue protein sequence, read N- to C-terminus: Large ribosomal subunit protein uL1c (230 aa).

It belongs to the universal ribosomal protein uL1 family. In terms of assembly, part of the 50S ribosomal subunit.

The protein resides in the plastid. It localises to the chloroplast. Functionally, binds directly to 23S rRNA. Might be involved in E site tRNA release (Potential). The sequence is that of Large ribosomal subunit protein uL1c (rpl1) from Trieres chinensis (Marine centric diatom).